The following is a 496-amino-acid chain: MERRNPSERGVPAGFSGHASVESGCETQESPATVVFRPPGDNTDGGAAAAAGGSQAAAAGAEPMEPESRPGPSGMNVVQVAELYPELRRILTITEDGQGLKGVKRERGACEATEEARNLAFSLMTRHRPECITFQQIKDNCANELDLLAQKYSIEQLTTYWLQPGDDFEEAIRVYAKVALRPDCKYKISKLVNIRNCCYISGNGAEVEIDTEDRVAFRCSMINMWPGVLGMDGVVIMNVRFTGPNFSGTVFLANTNLILHGVSFYGFNNTCVEAWTDVRVRGCAFYCCWKGVVCRPKSRASIKKCLFERCTLGILSEGNSRVRHNVASDCGCFMLVKSVAVIKHNMVCGNCEDRASQMLTCSDGNCHLLKTIHVASHSRKAWPVFEHNILTRCSLHLGNRRGVFLPYQCNLSHTKILLEPESMSKVNLNGVFDMTMKIWKVLRYDETRTRCRPCECGGKHIRNQPVMLDVTEELRPDHLVLACTRAEFGSSDEDTD.

The tract at residues 1-74 (MERRNPSERG…EPESRPGPSG (74 aa)) is disordered. The segment covering 45–61 (GGAAAAAGGSQAAAAGA) has biased composition (low complexity). Residues S490 and S491 each carry the phosphoserine modification. The residue at position 495 (T495) is a Phosphothreonine.

The protein belongs to the adenoviridae E1B 55 kDa protein family. Interacts with host PML-4 and PML-5; this interaction promotes efficient subnuclear targeting of E1B-55K to PML nuclear bodies. Interacts with E4-ORF3 protein. Interacts with E4-ORF6 protein. Post-translationally, phosphorylation at the C-terminus affects the subcellular location.

Its subcellular location is the host nucleus. The protein localises to the host cytoplasm. In terms of biological role, plays a major role to prevent cellular inhibition of viral genome replication. Assembles an SCF-like E3 ubiquitin ligase complex based on the cellular proteins ELOB, ELOC, CUL5 and RBX1, in cooperation with viral E4orf6. This viral RING-type ligase ubiquitinates cellular substrates and targets them to proteasomal degradation: TP53/p53, LIG4, MRE11-RAD50-NBS1 (MRN) complex, ITGA3, DAXX and BLM. E1B-55K probably acts as the substrate-specific adapter of the SCF-like E3 ubiquitin ligase complex. Degradation of host TP53/p53 activity is essential for preventing E1A-induced TP53 accumulation that would otherwise lead to cell apoptosis and growth arrest. E1B-55K also inactivates TP53 transcription-factor activity by binding its transactivation domain. E1B-55K also functions as a SUMO1 E3 ligase for TP53 which causes the latter to be sequestered in promyelocytic leukemia (PML) nuclear bodies thereby contributing to maximal inhibition of TP53 function. The protein is E1B 55 kDa protein of Homo sapiens (Human).